A 115-amino-acid polypeptide reads, in one-letter code: Procyclic form-specific polypeptide (115 aa).

Residues 1 to 27 form the signal peptide; the sequence is MAPRSLYLLAVLLFSANLFAGVGFAAA. The tract at residues 27–97 is disordered; it reads AAEGPEDKGL…PEPEPGAATL (71 aa). A compositionally biased stretch (basic and acidic residues) spans 31–52; it reads PEDKGLTKGGKGKGEKGTKVGA. N-linked (GlcNAc...) asparagine glycosylation is present at Asn56. Tandem repeats lie at residues 59 to 60, 61 to 62, 63 to 64, 65 to 66, 67 to 68, 69 to 70, 71 to 72, 73 to 74, 75 to 76, 77 to 78, 79 to 80, 81 to 82, 83 to 84, 85 to 86, 87 to 88, 89 to 90, and 91 to 92. The tract at residues 59-92 is 17 X 2 AA tandem repeats of [DE]-P; the sequence is DPDPEPEPEPEPEPEPEPEPEPEPEPEPEPEPEP. Positions 60-90 are enriched in acidic residues; that stretch reads PDPEPEPEPEPEPEPEPEPEPEPEPEPEPEP. Gly93 carries GPI-anchor amidated glycine lipidation. A propeptide spans 94–115 (removed in mature form); sequence AATLKSVALPFAIAAAALVAAF.

The protein localises to the cell membrane. In terms of biological role, major surface antigen of procyclic forms. The chain is Procyclic form-specific polypeptide (PROA) from Trypanosoma brucei brucei.